We begin with the raw amino-acid sequence, 235 residues long: Ribonuclease PH (235 aa).

Phosphate contacts are provided by residues Arg86 and 124 to 126; that span reads GTR.

It belongs to the RNase PH family. In terms of assembly, homohexameric ring arranged as a trimer of dimers.

The enzyme catalyses tRNA(n+1) + phosphate = tRNA(n) + a ribonucleoside 5'-diphosphate. Functionally, phosphorolytic 3'-5' exoribonuclease that plays an important role in tRNA 3'-end maturation. Removes nucleotide residues following the 3'-CCA terminus of tRNAs; can also add nucleotides to the ends of RNA molecules by using nucleoside diphosphates as substrates, but this may not be physiologically important. Probably plays a role in initiation of 16S rRNA degradation (leading to ribosome degradation) during starvation. The chain is Ribonuclease PH from Francisella tularensis subsp. mediasiatica (strain FSC147).